A 432-amino-acid polypeptide reads, in one-letter code: MTNVVVVGSQWGDEGKGKIVDWLSERADIVVRYQGGHNAGHTLVIDGTSYKLSLLPSGVVRPGKMAVIGNGVVVDPHALIAEIGRLEAQGVTVTPDNLRIADNATLILSLHRELDAMREDAASNSGTKIGTTRRGIGPAYEDKVGRRAIRVMDLADLDSLSGKVDRILTHHNALRRGLGVAEVSHQAIMDELTSVADRVLPFRDTVWLFLDKERRKGSRILFEGAQGTLLDIDHGTYPFVTSSNTVAGQAAAGSGMGPGSLGYILGITKAYTTRVGEGPFPTELKDAIGEFLGEKGHEFGVVTGRKRRCGWFDAALVRQSIATNGITGIALTKLDVLDGLEELKICVGYMLDGEQIDHLPASQGAQARVEPIYITLEGWKESTVGARSWADLPAQAIKYVRQVEELIGAPVALLSTSPERDDTILVTDPFED.

Residues 12-18 and 40-42 contribute to the GTP site; these read GDEGKGK and GHT. The active-site Proton acceptor is Asp-13. Mg(2+) contacts are provided by Asp-13 and Gly-40. Residues 13 to 16, 38 to 41, Thr-132, Arg-146, Gln-226, Thr-241, and Arg-305 each bind IMP; these read DEGK and NAGH. His-41 serves as the catalytic Proton donor. Substrate is bound at residue 301–307; that stretch reads VVTGRKR. GTP is bound by residues Arg-307, 333 to 335, and 415 to 417; these read KLD and STS.

It belongs to the adenylosuccinate synthetase family. In terms of assembly, homodimer. Requires Mg(2+) as cofactor.

It localises to the cytoplasm. The enzyme catalyses IMP + L-aspartate + GTP = N(6)-(1,2-dicarboxyethyl)-AMP + GDP + phosphate + 2 H(+). Its pathway is purine metabolism; AMP biosynthesis via de novo pathway; AMP from IMP: step 1/2. Its function is as follows. Plays an important role in the de novo pathway of purine nucleotide biosynthesis. Catalyzes the first committed step in the biosynthesis of AMP from IMP. This is Adenylosuccinate synthetase from Rhizobium johnstonii (strain DSM 114642 / LMG 32736 / 3841) (Rhizobium leguminosarum bv. viciae).